The sequence spans 332 residues: 2,3-diketo-L-gulonate reductase (332 aa).

The active-site Proton donor is the H44. NAD(+) contacts are provided by residues 168–174, 224–225, and 304–306; these read ITMVDMS, WK, and GHE.

This sequence belongs to the LDH2/MDH2 oxidoreductase family. DlgD subfamily. As to quaternary structure, homodimer.

It localises to the cytoplasm. The catalysed reaction is 3-dehydro-L-gulonate + NAD(+) = 2,3-dioxo-L-gulonate + NADH + H(+). It carries out the reaction 3-dehydro-L-gulonate + NADP(+) = 2,3-dioxo-L-gulonate + NADPH + H(+). Functionally, catalyzes the reduction of 2,3-diketo-L-gulonate in the presence of NADH, to form 3-keto-L-gulonate. This Salmonella typhi protein is 2,3-diketo-L-gulonate reductase.